The chain runs to 154 residues: Small ribosomal subunit protein bS6 (154 aa).

The disordered stretch occupies residues 97-154 (DSEPSAMMQKRDRDDRKDRERGRRRDDEGFGGGGGFGGDRGDRGDRGDRGERSFGGEG). 2 stretches are compositionally biased toward basic and acidic residues: residues 105-124 (QKRD…RDDE) and 135-154 (DRGD…GGEG).

The protein belongs to the bacterial ribosomal protein bS6 family.

Binds together with bS18 to 16S ribosomal RNA. In Methylobacterium radiotolerans (strain ATCC 27329 / DSM 1819 / JCM 2831 / NBRC 15690 / NCIMB 10815 / 0-1), this protein is Small ribosomal subunit protein bS6.